The primary structure comprises 411 residues: Lycopene beta cyclase (411 aa).

4–32 (ALVIGSGPAGLAIAAELAQRGLKVQGLSP) is a binding site for NAD(+).

This sequence belongs to the lycopene cyclase family. The cofactor is FAD.

It carries out the reaction a carotenoid psi-end group = a carotenoid beta-end derivative. The catalysed reaction is all-trans-lycopene = gamma-carotene. The enzyme catalyses gamma-carotene = all-trans-beta-carotene. It catalyses the reaction all-trans-neurosporene = beta-zeacarotene. The protein operates within carotenoid biosynthesis; beta-carotene biosynthesis. It participates in carotenoid biosynthesis; beta-zeacarotene biosynthesis. With respect to regulation, inhibited by the bleaching herbicide 2-(4-methylphenoxy)triethylamine hydrochloride (MPTA). In terms of biological role, catalyzes the double cyclization reaction which converts lycopene to beta-carotene. It also converts neurosporene to the monocyclic beta-zeacarotene but does not cyclize zeta-carotene. The chain is Lycopene beta cyclase from Synechococcus elongatus (strain ATCC 33912 / PCC 7942 / FACHB-805) (Anacystis nidulans R2).